The following is a 377-amino-acid chain: Required for respiratory growth protein 1, mitochondrial (377 aa).

It belongs to the RRG1 family.

It localises to the mitochondrion. Its function is as follows. Essential for respiratory growth and required for mitochondrial protein synthesis. Required for vacuolar acidification. In Candida glabrata (strain ATCC 2001 / BCRC 20586 / JCM 3761 / NBRC 0622 / NRRL Y-65 / CBS 138) (Yeast), this protein is Required for respiratory growth protein 1, mitochondrial (RRG1).